A 312-amino-acid polypeptide reads, in one-letter code: DDRGK domain-containing protein 1 (312 aa).

Over 1–2 (ME) the chain is Lumenal. Residues 3-23 (LIILVGIATALLVVIITLYLL) form a helical membrane-spanning segment. The Cytoplasmic segment spans residues 24 to 312 (QKKNAAPETK…ISAGGEEASS (289 aa)). Positions 59-79 (NQRNRLRQNAPAAPAGQVAPA) are enriched in low complexity. The segment at 59 to 162 (NQRNRLRQNA…RKHQEDLEAE (104 aa)) is disordered. Positions 110 to 162 (LDEKMGAKKRAKMEAKEQKRLQREQELHDREQRKVKEAKEEAERKHQEDLEAE) are enriched in basic and acidic residues.

Belongs to the DDRGK1 family. As to quaternary structure, interacts with Atg9; the interaction is transient.

Its subcellular location is the endoplasmic reticulum membrane. In terms of biological role, substrate adapter for ufmylation, the covalent attachment of the ubiquitin-like modifier UFM1 to substrate proteins. Required for ufmylation of Atg9; protects the nervous system during aging, possibly by stabilizing Atg9 and supporting its function. The chain is DDRGK domain-containing protein 1 from Drosophila yakuba (Fruit fly).